Here is a 432-residue protein sequence, read N- to C-terminus: Short/branched chain specific acyl-CoA dehydrogenase, mitochondrial (432 aa).

Residues 1–33 constitute a mitochondrion transit peptide; it reads MERATVRLLRGGALLRRNFPSCLSSWKTPPHAL. Residue lysine 70 is modified to N6-acetyllysine; alternate. Position 70 is an N6-succinyllysine; alternate (lysine 70). FAD-binding positions include 174 to 183 and 207 to 209; these read ICISETGAGS and WIS. A substrate-binding site is contributed by serine 183. Position 183 is a phosphoserine (serine 183). Tyrosine 229 and tyrosine 283 together coordinate substrate. Residue lysine 284 is modified to N6-acetyllysine; alternate. Position 284 is an N6-succinyllysine; alternate (lysine 284). Residue 291 to 294 participates in substrate binding; that stretch reads NEGR. FAD contacts are provided by residues arginine 319, glutamine 330, and 387 to 391; that span reads EWMGG. Catalysis depends on glutamate 414, which acts as the Proton acceptor. FAD is bound at residue 416 to 418; it reads TSN. Residue lysine 426 is modified to N6-acetyllysine.

It belongs to the acyl-CoA dehydrogenase family. As to quaternary structure, homotetramer. The cofactor is FAD.

The protein localises to the mitochondrion matrix. The catalysed reaction is 2-methylbutanoyl-CoA + oxidized [electron-transfer flavoprotein] + H(+) = (2E)-2-methylbut-2-enoyl-CoA + reduced [electron-transfer flavoprotein]. It carries out the reaction (2S)-2-methylbutanoyl-CoA + oxidized [electron-transfer flavoprotein] + H(+) = (2E)-2-methylbut-2-enoyl-CoA + reduced [electron-transfer flavoprotein]. It catalyses the reaction (2R)-2-methylbutanoyl-CoA + oxidized [electron-transfer flavoprotein] + H(+) = ethylacryloyl-CoA + reduced [electron-transfer flavoprotein]. The enzyme catalyses butanoyl-CoA + oxidized [electron-transfer flavoprotein] + H(+) = (2E)-butenoyl-CoA + reduced [electron-transfer flavoprotein]. The catalysed reaction is 2-methylpropanoyl-CoA + oxidized [electron-transfer flavoprotein] + H(+) = 2-methylpropenoyl-CoA + reduced [electron-transfer flavoprotein]. It carries out the reaction hexanoyl-CoA + oxidized [electron-transfer flavoprotein] + H(+) = (2E)-hexenoyl-CoA + reduced [electron-transfer flavoprotein]. It catalyses the reaction valproyl-CoA + oxidized [electron-transfer flavoprotein] + H(+) = (2E)-2-propylpent-2-enoyl-CoA + reduced [electron-transfer flavoprotein]. It functions in the pathway lipid metabolism; mitochondrial fatty acid beta-oxidation. Its pathway is amino-acid degradation; L-isoleucine degradation. In terms of biological role, short and branched chain specific acyl-CoA dehydrogenase that catalyzes the removal of one hydrogen from C-2 and C-3 of the fatty acyl-CoA thioester, resulting in the formation of trans-2-enoyl-CoA. Among the different mitochondrial acyl-CoA dehydrogenases, acts specifically on short and branched chain acyl-CoA derivatives such as (S)-2-methylbutyryl-CoA as well as short straight chain acyl-CoAs such as butyryl-CoA. Plays an important role in the metabolism of L-isoleucine by catalyzing the dehydrogenation of 2-methylbutyryl-CoA, one of the steps of the L-isoleucine catabolic pathway. Can also act on valproyl-CoA, a metabolite of the valproic acid drug. The polypeptide is Short/branched chain specific acyl-CoA dehydrogenase, mitochondrial (ACADSB) (Bos taurus (Bovine)).